A 268-amino-acid polypeptide reads, in one-letter code: Tryptophan synthase alpha chain (268 aa).

Catalysis depends on proton acceptor residues glutamate 49 and aspartate 60.

It belongs to the TrpA family. As to quaternary structure, tetramer of two alpha and two beta chains.

It catalyses the reaction (1S,2R)-1-C-(indol-3-yl)glycerol 3-phosphate + L-serine = D-glyceraldehyde 3-phosphate + L-tryptophan + H2O. It functions in the pathway amino-acid biosynthesis; L-tryptophan biosynthesis; L-tryptophan from chorismate: step 5/5. Its function is as follows. The alpha subunit is responsible for the aldol cleavage of indoleglycerol phosphate to indole and glyceraldehyde 3-phosphate. The polypeptide is Tryptophan synthase alpha chain (Aeromonas salmonicida (strain A449)).